Reading from the N-terminus, the 90-residue chain is Small ribosomal subunit protein uS17 (90 aa).

This sequence belongs to the universal ribosomal protein uS17 family. As to quaternary structure, part of the 30S ribosomal subunit.

Its function is as follows. One of the primary rRNA binding proteins, it binds specifically to the 5'-end of 16S ribosomal RNA. This is Small ribosomal subunit protein uS17 from Dehalococcoides mccartyi (strain ATCC BAA-2100 / JCM 16839 / KCTC 5957 / BAV1).